A 388-amino-acid chain; its full sequence is GTPase Obg (388 aa).

The region spanning 1–159 (MKFVDEAVIK…RELRLELLLL (159 aa)) is the Obg domain. Positions 160-333 (ADVGMLGLPN…LCYKLADFME (174 aa)) constitute an OBG-type G domain. GTP-binding positions include 166–173 (GLPNAGKS), 191–195 (FTTLI), 213–216 (DIPG), 283–286 (NKVD), and 314–316 (SAV). The Mg(2+) site is built by serine 173 and threonine 193. Residues 359–380 (NQGEVITEDDDDWDDWDDEEDD) form a disordered region. The segment covering 364-380 (ITEDDDDWDDWDDEEDD) has biased composition (acidic residues).

This sequence belongs to the TRAFAC class OBG-HflX-like GTPase superfamily. OBG GTPase family. Monomer. The cofactor is Mg(2+).

It localises to the cytoplasm. Its function is as follows. An essential GTPase which binds GTP, GDP and possibly (p)ppGpp with moderate affinity, with high nucleotide exchange rates and a fairly low GTP hydrolysis rate. Plays a role in control of the cell cycle, stress response, ribosome biogenesis and in those bacteria that undergo differentiation, in morphogenesis control. This Vibrio vulnificus (strain YJ016) protein is GTPase Obg.